Consider the following 257-residue polypeptide: GTP cyclohydrolase FolE2 (257 aa).

The protein belongs to the GTP cyclohydrolase IV family.

It carries out the reaction GTP + H2O = 7,8-dihydroneopterin 3'-triphosphate + formate + H(+). The protein operates within cofactor biosynthesis; 7,8-dihydroneopterin triphosphate biosynthesis; 7,8-dihydroneopterin triphosphate from GTP: step 1/1. Its function is as follows. Converts GTP to 7,8-dihydroneopterin triphosphate. In Kosmotoga olearia (strain ATCC BAA-1733 / DSM 21960 / TBF 19.5.1), this protein is GTP cyclohydrolase FolE2.